Reading from the N-terminus, the 257-residue chain is Phosphonates import ATP-binding protein PhnC (257 aa).

Residues 4 to 248 enclose the ABC transporter domain; sequence IEFKNVSKVY…IFSEIYGRTI (245 aa). 37 to 44 serves as a coordination point for ATP; it reads GLSGAGKS.

Belongs to the ABC transporter superfamily. Phosphonates importer (TC 3.A.1.9.1) family. As to quaternary structure, the complex is composed of two ATP-binding proteins (PhnC), two transmembrane proteins (PhnE) and a solute-binding protein (PhnD).

The protein resides in the cell membrane. The enzyme catalyses phosphonate(out) + ATP + H2O = phosphonate(in) + ADP + phosphate + H(+). Part of the ABC transporter complex PhnCDE involved in phosphonates import. Responsible for energy coupling to the transport system. In Staphylococcus aureus (strain bovine RF122 / ET3-1), this protein is Phosphonates import ATP-binding protein PhnC.